Here is a 702-residue protein sequence, read N- to C-terminus: Polyphosphate kinase (702 aa).

Position 55 (N55) interacts with ATP. Mg(2+) contacts are provided by R389 and R419. H449 (phosphohistidine intermediate) is an active-site residue. Residues Y482, R578, and H606 each contribute to the ATP site.

It belongs to the polyphosphate kinase 1 (PPK1) family. Mg(2+) is required as a cofactor. In terms of processing, an intermediate of this reaction is the autophosphorylated ppk in which a phosphate is covalently linked to a histidine residue through a N-P bond.

The catalysed reaction is [phosphate](n) + ATP = [phosphate](n+1) + ADP. Functionally, catalyzes the reversible transfer of the terminal phosphate of ATP to form a long-chain polyphosphate (polyP). The protein is Polyphosphate kinase of Bacillus anthracis.